A 167-amino-acid chain; its full sequence is MAISLATAYISPCFTPESSNSASPSRTLSSVRLPSQIRRFGSVQSPSSSTRFAPLTVRAAKKQTFNSFDDLLQNSDKPVLVDFYATWCGPCQLMVPILNEVSETLKDIIAVVKIDTEKYPSLANKYQIEALPTFILFKDGKLWDRFEGALPANQLVERIENSLQVKQ.

The N-terminal 58 residues, 1-58 (MAISLATAYISPCFTPESSNSASPSRTLSSVRLPSQIRRFGSVQSPSSSTRFAPLTVR), are a transit peptide targeting the chloroplast. The region spanning 59–164 (AAKKQTFNSF…LVERIENSLQ (106 aa)) is the Thioredoxin domain. Catalysis depends on nucleophile residues C88 and C91. C88 and C91 are disulfide-bonded.

It belongs to the thioredoxin family. Plant Y-type subfamily. As to expression, expressed in leaves.

The protein resides in the plastid. Its subcellular location is the chloroplast stroma. Functionally, thiol-disulfide oxidoreductase that poorly activates chloroplastic malate dehydrogenase (NADP-MDH) and fructose-1,6-bisphosphatase. Provides reducing equivalents for peroxiredoxin Q. The polypeptide is Thioredoxin Y2, chloroplastic (Arabidopsis thaliana (Mouse-ear cress)).